A 96-amino-acid chain; its full sequence is Myoglobin (96 aa).

In terms of domain architecture, Globin spans 1 to 96 (GLSDGEWQLV…AKTKELGFLG (96 aa)). Ser3 is subject to Phosphoserine. His61 serves as a coordination point for nitrite. Residue His61 participates in O2 binding. A Phosphothreonine modification is found at Thr64.

It belongs to the globin family. Monomeric.

The protein resides in the cytoplasm. Its subcellular location is the sarcoplasm. It carries out the reaction Fe(III)-heme b-[protein] + nitric oxide + H2O = Fe(II)-heme b-[protein] + nitrite + 2 H(+). The enzyme catalyses H2O2 + AH2 = A + 2 H2O. Monomeric heme protein which primary function is to store oxygen and facilitate its diffusion within muscle tissues. Reversibly binds oxygen through a pentacoordinated heme iron and enables its timely and efficient release as needed during periods of heightened demand. Depending on the oxidative conditions of tissues and cells, and in addition to its ability to bind oxygen, it also has a nitrite reductase activity whereby it regulates the production of bioactive nitric oxide. Under stress conditions, like hypoxia and anoxia, it also protects cells against reactive oxygen species thanks to its pseudoperoxidase activity. This chain is Myoglobin (MB), found in Ailuropoda melanoleuca (Giant panda).